The following is a 488-amino-acid chain: Zinc metalloproteinase-disintegrin VMP-II (488 aa).

The N-terminal stretch at 1-20 (MIQVLLVTICLAVFPYQGSS) is a signal peptide. Residues 21–191 (IILESGNVND…KASQSNIPPE (171 aa)) constitute a propeptide that is removed on maturation. One can recognise a Peptidase M12B domain in the interval 198–396 (RYIELVVVAD…STTRCLHNEP (199 aa)). Positions 201 and 285 each coordinate Ca(2+). Asparagine 296 is a glycosylation site (N-linked (GlcNAc...) asparagine). Disulfide bonds link cysteine 309–cysteine 391, cysteine 349–cysteine 373, and cysteine 351–cysteine 356. Residue histidine 334 coordinates Zn(2+). Glutamate 335 is an active-site residue. 2 residues coordinate Zn(2+): histidine 338 and histidine 344. The Ca(2+) site is built by cysteine 391, asparagine 394, asparagine 409, glutamate 413, glutamate 416, and aspartate 419. Residues 404-488 (PPFCGNYFKE…ADCPRNGLYG (85 aa)) enclose the Disintegrin domain. 7 disulfides stabilise this stretch: cysteine 407-cysteine 426, cysteine 418-cysteine 436, cysteine 420-cysteine 431, cysteine 430-cysteine 453, cysteine 444-cysteine 450, cysteine 449-cysteine 474, and cysteine 462-cysteine 481. Positions 466-468 (RGD) match the Cell attachment site motif.

Belongs to the venom metalloproteinase (M12B) family. P-II subfamily. P-IIb sub-subfamily. In terms of assembly, homodimer; disulfide-linked (disintegrin). The cofactor is Zn(2+). As to expression, expressed by the venom gland.

The protein localises to the secreted. In terms of biological role, zinc metalloproteinase-disintegrin VMP-II: inhibits ADP-induced platelet aggregation (probably by binding integrin alpha-IIb/beta-3 (ITGA2B/ITGB3)) and degrades fibrinogen. Recombinant disintegrin r-Cam-dis (413-488): this recombinant protein inhibits platelet adhesion to fibrinogen (IC(50) is 1 nM), inhibits collagen- (IC(50) is 18 nM) and ADP-induced (IC(50) is 6 nM) platelet aggregation, and also inhibits platelet function on clot retraction. May act by binding integrin alpha-IIb/beta-3 (ITGA2B/ITGB3). The sequence is that of Zinc metalloproteinase-disintegrin VMP-II from Crotalus adamanteus (Eastern diamondback rattlesnake).